The sequence spans 491 residues: Probable V-type proton ATPase subunit B 1 (491 aa).

Arg-380 is an ATP binding site.

It belongs to the ATPase alpha/beta chains family. As to quaternary structure, V-ATPase is a heteromultimeric enzyme made up of two complexes: the ATP-hydrolytic V1 complex and the proton translocation V0 complex. The V1 complex consists of three catalytic AB heterodimers that form a heterohexamer, three peripheral stalks each consisting of EG heterodimers, one central rotor including subunits D and F, and the regulatory subunits C and H. The proton translocation complex V0 consists of the proton transport subunit a, a ring of proteolipid subunits c9c'', rotary subunit d, subunits e and f, and the accessory subunits vah-19/Ac45 and vah-20/PRR.

Its function is as follows. Non-catalytic subunit of the V1 complex of vacuolar(H+)-ATPase (V-ATPase), a multisubunit enzyme composed of a peripheral complex (V1) that hydrolyzes ATP and a membrane integral complex (V0) that translocates protons. V-ATPase is responsible for acidifying and maintaining the pH of intracellular compartments and in some cell types, is targeted to the plasma membrane, where it is responsible for acidifying the extracellular environment. Essential for the proper assembly and activity of V-ATPase. Required maternally for early embryogenesis and zygotically during morphogenesis. Specifically, involved in the clearance of apoptotic cell corpses in embryos. Also, during embryonic development, the V-ATPase is required to repress fusion of epidermal cells probably by negatively regulating eff-1-mediated cell fusion. In neurons, required for necrotic cell death by promoting intracellular acidification. Required for cell death induced by hypoxia. Required for acidification of synaptic vesicles and the release of neurotransmitters from adult neurons. The protein is Probable V-type proton ATPase subunit B 1 of Caenorhabditis briggsae.